Reading from the N-terminus, the 127-residue chain is Gamma-synuclein (127 aa).

Repeat copies occupy residues 20-30 (EKTKQGVTEAA) and 31-41 (EKTKEGVMYVG). The segment at 20–67 (EKTKQGVTEAAEKTKEGVMYVGAKTKEGVVQSVTSVAEKTKEQANAVS) is 4 X 11 AA tandem repeats of [EGSA]-K-T-K-[EQ]-[GQ]-V-X(4). The stretch at 42–56 (AKTKEGVVQSVTSVA) is one 3; approximate repeat. The stretch at 57 to 67 (EKTKEQANAVS) is repeat 4. 3 positions are modified to phosphoserine: Ser67, Ser72, and Ser124. The tract at residues 99–127 (ALKQPVPSQEDEAAKAEEQVAEETKSGGD) is disordered. A compositionally biased stretch (basic and acidic residues) spans 110-127 (EAAKAEEQVAEETKSGGD).

Belongs to the synuclein family. In terms of assembly, may be a centrosome-associated protein. Interacts with MYOC; affects its secretion and its aggregation. Phosphorylated by BARK1 and GRK5. In terms of tissue distribution, predominantly expressed in retina (predominantly in outer nuclear layer, also in inner segment of photoreceptor cells, some individual cells located in the inner nuclear layer, inner plexiform layer and in nerve fiber layer). Also found in brain and heart.

It is found in the cytoplasm. It localises to the perinuclear region. The protein resides in the cytoskeleton. Its subcellular location is the microtubule organizing center. The protein localises to the centrosome. It is found in the spindle. Functionally, plays a role in neurofilament network integrity. May be involved in modulating axonal architecture during development and in the adult. In vitro, increases the susceptibility of neurofilament-H to calcium-dependent proteases. May also function in modulating the keratin network in skin. Activates the MAPK and Elk-1 signal transduction pathway. The sequence is that of Gamma-synuclein (SNCG) from Bos taurus (Bovine).